Here is a 336-residue protein sequence, read N- to C-terminus: Mitochondrial import receptor subunit TOM40 homolog (336 aa).

The interval 1–58 (MGNVLAASSPAPPAAGSPPAPGLVSVPPGFTMPPVAGLTPTPDKKETQEDRLPNPGTF) is disordered. The span at 10–21 (PAPPAAGSPPAP) shows a compositional bias: pro residues. Positions 42–52 (PDKKETQEDRL) are enriched in basic and acidic residues.

It belongs to the Tom40 family. In terms of assembly, forms part of the preprotein translocase complex of the outer mitochondrial membrane (TOM complex). Interacts with mitochondrial targeting sequences.

It localises to the mitochondrion outer membrane. Functionally, channel-forming protein essential for import of protein precursors into mitochondria. This Xenopus tropicalis (Western clawed frog) protein is Mitochondrial import receptor subunit TOM40 homolog (tomm40).